The chain runs to 166 residues: Transcriptional repressor NrdR (166 aa).

Residues 3-34 fold into a zinc finger; sequence CPHCHHNGSRVVDSRPTDDGRVIRRRRECESC. One can recognise an ATP-cone domain in the interval 49-139; it reads LLVIKKNGTR…VYRQFKDTGV (91 aa).

Belongs to the NrdR family. Zn(2+) serves as cofactor.

Its function is as follows. Negatively regulates transcription of bacterial ribonucleotide reductase nrd genes and operons by binding to NrdR-boxes. This Levilactobacillus brevis (strain ATCC 367 / BCRC 12310 / CIP 105137 / JCM 1170 / LMG 11437 / NCIMB 947 / NCTC 947) (Lactobacillus brevis) protein is Transcriptional repressor NrdR.